The chain runs to 380 residues: Pregnancy-associated glycoprotein 6 (380 aa).

Positions 1-15 (MKWLVLLGLVSISEC) are cleaved as a signal peptide. The propeptide at 16 to 53 (IVKIPLRRVKTMRKTLSEKNMLNNFLKEHAYRLSQISF) is activation peptide. N-linked (GlcNAc...) asparagine glycans are attached at residues N57 and N74. The region spanning 71–377 (YLGNITIGTP…DRGHDRIGLA (307 aa)) is the Peptidase A1 domain. D89 is a catalytic residue. C102 and C107 are disulfide-bonded. N-linked (GlcNAc...) asparagine glycosylation occurs at N125. A disulfide bridge connects residues C261 and C265. D270 is a catalytic residue. C303 and C337 form a disulfide bridge.

The protein belongs to the peptidase A1 family. In terms of tissue distribution, trophoblast and placental tissue. Produced specifically in the invasive binucleate cells of the placenta.

Its subcellular location is the secreted. The protein resides in the extracellular space. The chain is Pregnancy-associated glycoprotein 6 from Ovis aries (Sheep).